The chain runs to 455 residues: Bifunctional protein GlmU (455 aa).

The tract at residues 1–226 (MGLSVVILAA…EFEILGVNDR (226 aa)) is pyrophosphorylase. UDP-N-acetyl-alpha-D-glucosamine is bound by residues 8-11 (LAAG), K22, Q73, 78-79 (GT), 99-101 (YGD), G136, E151, N166, and N224. D101 is a Mg(2+) binding site. Position 224 (N224) interacts with Mg(2+). Positions 227 to 247 (TQLASLERVWQRNVAEKIMAK) are linker. Positions 248–455 (GVSIADPNRF…WQRSVKKTDK (208 aa)) are N-acetyltransferase. Residues R330 and K348 each coordinate UDP-N-acetyl-alpha-D-glucosamine. The active-site Proton acceptor is H360. 2 residues coordinate UDP-N-acetyl-alpha-D-glucosamine: Y363 and N374. Acetyl-CoA contacts are provided by residues A377, 383–384 (NY), S402, A420, and R437.

This sequence in the N-terminal section; belongs to the N-acetylglucosamine-1-phosphate uridyltransferase family. In the C-terminal section; belongs to the transferase hexapeptide repeat family. In terms of assembly, homotrimer. The cofactor is Mg(2+).

The protein resides in the cytoplasm. It catalyses the reaction alpha-D-glucosamine 1-phosphate + acetyl-CoA = N-acetyl-alpha-D-glucosamine 1-phosphate + CoA + H(+). The enzyme catalyses N-acetyl-alpha-D-glucosamine 1-phosphate + UTP + H(+) = UDP-N-acetyl-alpha-D-glucosamine + diphosphate. Its pathway is nucleotide-sugar biosynthesis; UDP-N-acetyl-alpha-D-glucosamine biosynthesis; N-acetyl-alpha-D-glucosamine 1-phosphate from alpha-D-glucosamine 6-phosphate (route II): step 2/2. It functions in the pathway nucleotide-sugar biosynthesis; UDP-N-acetyl-alpha-D-glucosamine biosynthesis; UDP-N-acetyl-alpha-D-glucosamine from N-acetyl-alpha-D-glucosamine 1-phosphate: step 1/1. It participates in bacterial outer membrane biogenesis; LPS lipid A biosynthesis. Functionally, catalyzes the last two sequential reactions in the de novo biosynthetic pathway for UDP-N-acetylglucosamine (UDP-GlcNAc). The C-terminal domain catalyzes the transfer of acetyl group from acetyl coenzyme A to glucosamine-1-phosphate (GlcN-1-P) to produce N-acetylglucosamine-1-phosphate (GlcNAc-1-P), which is converted into UDP-GlcNAc by the transfer of uridine 5-monophosphate (from uridine 5-triphosphate), a reaction catalyzed by the N-terminal domain. In Francisella tularensis subsp. holarctica (strain OSU18), this protein is Bifunctional protein GlmU.